Here is a 419-residue protein sequence, read N- to C-terminus: D-galactonate dehydratase family member SEN1436 (419 aa).

Substrate-binding residues include Gln45 and His129. Catalysis depends on Tyr160, which acts as the Proton donor/acceptor. Residue Asp225 coordinates Mg(2+). His227 functions as the Proton donor/acceptor in the catalytic mechanism. Glu251 and Glu277 together coordinate Mg(2+). 5 residues coordinate substrate: Glu277, Arg298, His327, Asp331, and Glu354.

The protein belongs to the mandelate racemase/muconate lactonizing enzyme family. GalD subfamily. In terms of assembly, homotetramer. It depends on Mg(2+) as a cofactor.

The catalysed reaction is D-gluconate = 2-dehydro-3-deoxy-D-gluconate + H2O. In terms of biological role, has low D-gluconate dehydratase activity (in vitro), suggesting that it has no significant role in D-gluconate degradation in vivo. Has no detectable activity with a panel of 70 other acid sugars (in vitro). The protein is D-galactonate dehydratase family member SEN1436 of Salmonella enteritidis PT4 (strain P125109).